A 349-amino-acid polypeptide reads, in one-letter code: GMP reductase (349 aa).

I108 to A131 serves as a coordination point for NADP(+). The K(+) site is built by G181 and G183. C186 serves as the catalytic Thioimidate intermediate. An NADP(+)-binding site is contributed by I216–V239.

This sequence belongs to the IMPDH/GMPR family. GuaC type 1 subfamily. In terms of assembly, homotetramer.

The enzyme catalyses IMP + NH4(+) + NADP(+) = GMP + NADPH + 2 H(+). Catalyzes the irreversible NADPH-dependent deamination of GMP to IMP. It functions in the conversion of nucleobase, nucleoside and nucleotide derivatives of G to A nucleotides, and in maintaining the intracellular balance of A and G nucleotides. This Buchnera aphidicola subsp. Acyrthosiphon pisum (strain 5A) protein is GMP reductase.